Reading from the N-terminus, the 400-residue chain is Na(+)/H(+) antiporter NhaA (400 aa).

A run of 12 helical transmembrane segments spans residues 18–38, 68–88, 105–125, 133–153, 163–183, 186–206, 211–231, 232–252, 267–287, 305–325, 338–358, and 372–392; these read LATE…AIII, VHMW…GLEI, LPAL…LAVS, GGWA…LALL, VMLV…IAVF, SSIN…LLAF, VVAL…TLLS, GVHA…SAGS, GLAP…NAGV, IALG…LLAV, WLQI…SLFI, and AAKI…CVIL.

This sequence belongs to the NhaA Na(+)/H(+) (TC 2.A.33) antiporter family.

The protein resides in the cell inner membrane. It carries out the reaction Na(+)(in) + 2 H(+)(out) = Na(+)(out) + 2 H(+)(in). Functionally, na(+)/H(+) antiporter that extrudes sodium in exchange for external protons. In Pseudomonas entomophila (strain L48), this protein is Na(+)/H(+) antiporter NhaA.